We begin with the raw amino-acid sequence, 162 residues long: Phosphopantetheine adenylyltransferase (162 aa).

Thr10 is a substrate binding site. ATP contacts are provided by residues 10–11 (TF) and His18. The substrate site is built by Lys42, Met74, and Arg88. ATP-binding positions include 89-91 (GLR), Glu99, and 124-130 (YAFLSST).

Belongs to the bacterial CoaD family. As to quaternary structure, homohexamer. It depends on Mg(2+) as a cofactor.

It is found in the cytoplasm. The enzyme catalyses (R)-4'-phosphopantetheine + ATP + H(+) = 3'-dephospho-CoA + diphosphate. It participates in cofactor biosynthesis; coenzyme A biosynthesis; CoA from (R)-pantothenate: step 4/5. Reversibly transfers an adenylyl group from ATP to 4'-phosphopantetheine, yielding dephospho-CoA (dPCoA) and pyrophosphate. The sequence is that of Phosphopantetheine adenylyltransferase from Aliivibrio salmonicida (strain LFI1238) (Vibrio salmonicida (strain LFI1238)).